We begin with the raw amino-acid sequence, 66 residues long: Large ribosomal subunit protein bL31 (66 aa).

Cys-16, Cys-18, Cys-36, and Cys-39 together coordinate Zn(2+).

Belongs to the bacterial ribosomal protein bL31 family. Type A subfamily. In terms of assembly, part of the 50S ribosomal subunit. Zn(2+) serves as cofactor.

Binds the 23S rRNA. The sequence is that of Large ribosomal subunit protein bL31 from Anoxybacillus flavithermus (strain DSM 21510 / WK1).